The primary structure comprises 308 residues: Ribosomal protein L11 methyltransferase (308 aa).

The S-adenosyl-L-methionine site is built by threonine 160, glycine 181, aspartate 203, and asparagine 245.

Belongs to the methyltransferase superfamily. PrmA family.

The protein localises to the cytoplasm. The catalysed reaction is L-lysyl-[protein] + 3 S-adenosyl-L-methionine = N(6),N(6),N(6)-trimethyl-L-lysyl-[protein] + 3 S-adenosyl-L-homocysteine + 3 H(+). In terms of biological role, methylates ribosomal protein L11. This chain is Ribosomal protein L11 methyltransferase, found in Thermoanaerobacter pseudethanolicus (strain ATCC 33223 / 39E) (Clostridium thermohydrosulfuricum).